We begin with the raw amino-acid sequence, 138 residues long: Small ribosomal subunit protein uS9c (138 aa).

It belongs to the universal ribosomal protein uS9 family.

It is found in the plastid. Its subcellular location is the chloroplast. This is Small ribosomal subunit protein uS9c (rps9) from Trieres chinensis (Marine centric diatom).